The sequence spans 216 residues: Adenylate kinase (216 aa).

10–15 (GSGKGT) is a binding site for ATP. The tract at residues 30–59 (STGEILRKEIKKNKKTKKYIKKTINKGKLI) is NMP. AMP-binding positions include Thr31, Arg36, 57–59 (KLI), 85–88 (GFPR), and Gln92. Residues 121–158 (GRLIHASSGRTYHKIFNPPKIKNKDDITQEKLCSRNDD) form an LID region. Residues Arg122 and 131–132 (TY) each bind ATP. 2 residues coordinate AMP: Arg155 and Arg166. Gln196 serves as a coordination point for ATP.

The protein belongs to the adenylate kinase family. As to quaternary structure, monomer.

It is found in the cytoplasm. The enzyme catalyses AMP + ATP = 2 ADP. It functions in the pathway purine metabolism; AMP biosynthesis via salvage pathway; AMP from ADP: step 1/1. Its function is as follows. Catalyzes the reversible transfer of the terminal phosphate group between ATP and AMP. Plays an important role in cellular energy homeostasis and in adenine nucleotide metabolism. The sequence is that of Adenylate kinase from Buchnera aphidicola subsp. Cinara cedri (strain Cc).